A 320-amino-acid chain; its full sequence is Glutathione synthetase (320 aa).

An ATP-grasp domain is found at 133 to 317 (KMYTLQFAAV…LGEKVICWLE (185 aa)). An ATP-binding site is contributed by 159-215 (LEEHGAAVLKPLGGKAGEGILFLDPGDRNFNSLVEISTQHGKEPVMVQRFLPEAKEG). Positions 288 and 290 each coordinate Mg(2+).

This sequence belongs to the prokaryotic GSH synthase family. The cofactor is Mg(2+). Requires Mn(2+) as cofactor.

The enzyme catalyses gamma-L-glutamyl-L-cysteine + glycine + ATP = glutathione + ADP + phosphate + H(+). Its pathway is sulfur metabolism; glutathione biosynthesis; glutathione from L-cysteine and L-glutamate: step 2/2. The polypeptide is Glutathione synthetase (Synechocystis sp. (strain ATCC 27184 / PCC 6803 / Kazusa)).